Consider the following 348-residue polypeptide: Spore wall and anchoring disk complex protein EnP1 (348 aa).

A signal peptide spans 1-16 (MKLLGLLISAFGAINA). 3 N-linked (GlcNAc...) asparagine glycosylation sites follow: Asn47, Asn139, and Asn140. Positions 193-198 (PRHGRS) match the HBM1 motif. Residues 248–256 (IRKGKDKKC) carry the HBM2 motif. The short motif at 322-327 (LKKIRG) is the HBM3 element.

The protein localises to the spore wall. The protein resides in the spore. It localises to the perispore. Functionally, spore wall protein involved in the adhesion to host cells surface glycoaminoglycans (GAGs). Microsporidian spore adherence is an integral part of activation and host cell infection. The sequence is that of Spore wall and anchoring disk complex protein EnP1 (EnP1) from Encephalitozoon intestinalis (Microsporidian parasite).